Here is a 500-residue protein sequence, read N- to C-terminus: Glucosylglycerol-phosphate synthase (500 aa).

It belongs to the glycosyltransferase 20 family.

The enzyme catalyses ADP-alpha-D-glucose + sn-glycerol 3-phosphate = 2-O-(alpha-D-glucopyranosyl)-sn-glycerol 3-phosphate + ADP + H(+). Its pathway is glycan metabolism; glucosylglycerol biosynthesis. In terms of biological role, involved in salt tolerance by producing GG-phosphate from ADP-glucose and glycerol-3-phosphate (G3P), an intermediate in the synthesis of the osmolyte glucosylglycerol (GG). The protein is Glucosylglycerol-phosphate synthase (ggpS) of Picosynechococcus sp. (strain ATCC 27264 / PCC 7002 / PR-6) (Agmenellum quadruplicatum).